Consider the following 607-residue polypeptide: MTTQRNDNLEQPGRSVIFDDGLSATDTPNETNVVETEVLIVGSGPAGSSAAMFLSTQGISNIMITKYRWTANTPRAHITNQRTMEILRDAGIEDQVLAEAVPHELMGDTVYCESMAGEEIGRRPTWGTRPDRRADYELASPAMPCDIPQTLLEPIMLKNATMRGTQTQFSTEYLSHTQDDKGVSVQVLNRLTGQEYTIRAKYLIGADGARSKVAADIGGSMNITFKADLSHWRPSALDPVLGLPPRIEYRWPRRWFDRMVRPWNEWLVVWGFDINQEPPKLNDDEAIQIVRNLVGIEDLDVEILGYSLWGNNDQYATHLQKGRVCCAGDAIHKHPPSHGLGSNTSIQDSYNLCWKLACVLKGQAGPELLETYSTERAPIAKQIVTRANGSSSEYKPIFDALGVTDATTNDEFVEKLALRKENSPEGARRRAALRAALDNKDYEFNAQGTEIGQFYDSSAVITDGQKRPAMTEDPMLHHQKSTFPGLRLPHAWLGDAKEKYSTHDIAEGTRFTIFTGITGQAWADAAVRVAERLGIDLKAVVIGEGQPVQDLYGDWLRQREVDEDGVILVRPDKHIGWRAQSMVADPETALFDVLSGCCIPSKPALRI.

A disordered region spans residues 1–28 (MTTQRNDNLEQPGRSVIFDDGLSATDTP). FAD contacts are provided by residues 37–66 (EVLI…MITK) and 319–329 (LQKGRVCCAGD).

Belongs to the PheA/TfdB FAD monooxygenase family. It depends on FAD as a cofactor.

It carries out the reaction phenol + NADPH + O2 + H(+) = catechol + NADP(+) + H2O. The protein operates within aromatic compound metabolism; phenol degradation. The sequence is that of Phenol 2-monooxygenase (pheA) from Pseudomonas sp. (strain EST1001).